Here is a 148-residue protein sequence, read N- to C-terminus: uncharacterized protein (148 aa).

Positions 1–23 (MKALVAVSAVAVVALLGVSSAQA) are cleaved as a signal peptide. Residues 22–45 (QADPEADPGAGEANYGGPPSSPRL) are disordered.

It to M.leprae ML2452.

This is an uncharacterized protein from Mycobacterium bovis (strain ATCC BAA-935 / AF2122/97).